The following is a 128-amino-acid chain: uncharacterized protein (128 aa).

3 consecutive transmembrane segments (helical) span residues 13-35 (FQMASFITSGLLVIIGLYGVFFV), 42-64 (IIALEILGSGVNLALIAIGYNGG), and 90-112 (LVLTNIVIEASMLAVMLGVSIIL).

It is found in the cell membrane. This is an uncharacterized protein from Methanocaldococcus jannaschii (strain ATCC 43067 / DSM 2661 / JAL-1 / JCM 10045 / NBRC 100440) (Methanococcus jannaschii).